We begin with the raw amino-acid sequence, 480 residues long: UDP-N-acetylmuramoylalanine--D-glutamate ligase (480 aa).

An ATP-binding site is contributed by G127–T133.

The protein belongs to the MurCDEF family.

It localises to the cytoplasm. The catalysed reaction is UDP-N-acetyl-alpha-D-muramoyl-L-alanine + D-glutamate + ATP = UDP-N-acetyl-alpha-D-muramoyl-L-alanyl-D-glutamate + ADP + phosphate + H(+). It participates in cell wall biogenesis; peptidoglycan biosynthesis. In terms of biological role, cell wall formation. Catalyzes the addition of glutamate to the nucleotide precursor UDP-N-acetylmuramoyl-L-alanine (UMA). The chain is UDP-N-acetylmuramoylalanine--D-glutamate ligase from Tropheryma whipplei (strain TW08/27) (Whipple's bacillus).